Reading from the N-terminus, the 447-residue chain is uncharacterized protein (447 aa).

Residues R392–K435 form a disordered region. Residues K395 to S407 show a composition bias toward low complexity. The segment covering L408 to S421 has biased composition (polar residues).

This is an uncharacterized protein from Invertebrate iridescent virus 3 (IIV-3).